A 334-amino-acid chain; its full sequence is Fe-S cluster assembly protein DRE2 (334 aa).

The tract at residues 1–131 (MASTKTGLVL…ASIKAEPVAV (131 aa)) is N-terminal SAM-like domain. Residues 132 to 228 (PLRNHKKTTT…EDELVDENEM (97 aa)) form a linker region. The tract at residues 135-229 (NHKKTTTPGT…DELVDENEMR (95 aa)) is disordered. Positions 140 to 150 (TTPGTTTTAKK) are enriched in low complexity. Composition is skewed to acidic residues over residues 182-192 (DSEDEDEESEG) and 215-227 (DSIE…DENE). Positions 238, 249, 252, and 254 each coordinate [2Fe-2S] cluster. The segment at 238–254 (CGKSKTRRRKACKDCTC) is fe-S binding site A. Residues Cys297, Cys300, Cys308, and Cys311 each contribute to the [4Fe-4S] cluster site. 2 short sequence motifs (cx2C motif) span residues 297 to 300 (CGSC) and 308 to 311 (CSGC). The interval 297–311 (CGSCTLGDAFRCSGC) is fe-S binding site B.

It belongs to the anamorsin family. As to quaternary structure, monomer. Interacts with TAH18. Interacts with MIA40. The cofactor is [2Fe-2S] cluster. It depends on [4Fe-4S] cluster as a cofactor.

It localises to the cytoplasm. The protein localises to the mitochondrion intermembrane space. Functionally, component of the cytosolic iron-sulfur (Fe-S) protein assembly (CIA) machinery required for the maturation of extramitochondrial Fe-S proteins. Part of an electron transfer chain functioning in an early step of cytosolic Fe-S biogenesis, facilitating the de novo assembly of a [4Fe-4S] cluster on the scaffold complex CFD1-NBP35. Electrons are transferred to DRE2 from NADPH via the FAD- and FMN-containing protein TAH18. TAH18-DRE2 are also required for the assembly of the diferric tyrosyl radical cofactor of ribonucleotide reductase (RNR), probably by providing electrons for reduction during radical cofactor maturation in the catalytic small subunit RNR2. The protein is Fe-S cluster assembly protein DRE2 of Zygosaccharomyces rouxii (strain ATCC 2623 / CBS 732 / NBRC 1130 / NCYC 568 / NRRL Y-229).